The following is a 55-amino-acid chain: uncharacterized protein (55 aa).

Over residues Met1–His15 the composition is skewed to polar residues. The interval Met1–Cys26 is disordered. The span at Ser16–Cys26 shows a compositional bias: basic and acidic residues.

This is an uncharacterized protein from Escherichia coli (strain K12).